Reading from the N-terminus, the 273-residue chain is Manganese catalase (273 aa).

A Mn(2+)-binding site is contributed by Glu-35. Asp-57 and Asp-61 together coordinate Ca(2+). Mn(2+) is bound by residues Glu-66, His-69, Glu-149, and His-182. Ca(2+) contacts are provided by Asn-220, Ser-222, and Gly-224. Positions 254 to 273 (EKPELKPAPPFVHNTLPGRE) are disordered.

The protein belongs to the manganese catalase family. Ca(2+) serves as cofactor. It depends on Mn(2+) as a cofactor.

The catalysed reaction is 2 H2O2 = O2 + 2 H2O. In terms of biological role, catalyzes the decomposition of hydrogen peroxide into water and oxygen. The chain is Manganese catalase (ydbD) from Bacillus subtilis (strain 168).